Reading from the N-terminus, the 656-residue chain is Heat shock 70 kDa protein, mitochondrial (656 aa).

Residues 1-23 (MFARRLRGAGSLAAASLARWQSS) constitute a mitochondrion transit peptide. Positions 624-656 (EYQQAAAGNSSSSSGNTDSSQGEQQQQGDQQKQ) are disordered. Residues 626-656 (QQAAAGNSSSSSGNTDSSQGEQQQQGDQQKQ) are compositionally biased toward low complexity.

The protein belongs to the heat shock protein 70 family.

It is found in the mitochondrion matrix. The protein resides in the kinetoplast. Its function is as follows. May participate in eukaryotic mitochondrial DNA replication. The polypeptide is Heat shock 70 kDa protein, mitochondrial (MTP70) (Trypanosoma cruzi).